A 432-amino-acid polypeptide reads, in one-letter code: Nematocyst expressed protein 3-like (432 aa).

Residues Met1–Ala19 form the signal peptide. Disulfide bonds link Cys52/Cys91, Cys59/Cys84, Cys73/Cys88, Cys125/Cys140, Cys157/Cys176, and Cys166/Cys180. 3 consecutive ShKT domains span residues Cys59–Cys91, Val107–Cys143, and Gly149–Tyr183. Positions Gly235–Ala313 are enriched in low complexity. Residues Gly235–His432 form a disordered region. The span at Ala314–Ala330 shows a compositional bias: pro residues. A compositionally biased stretch (low complexity) spans Pro331–Gly408. Residues Lys409–His432 show a composition bias toward basic residues.

This sequence belongs to the NEP3 family. Nematocytes. In late planulae, transcripts are found throughout the ectoderm in nematocytes, with high concentration of expressing cells in the oral pole. In primary polyps, is expressed in nematocytes in the body wall and physa ectoderm and in the upper and lower pharynx.

It is found in the nematocyst. It localises to the secreted. In terms of biological role, probable toxin. The polypeptide is Nematocyst expressed protein 3-like (Nematostella vectensis (Starlet sea anemone)).